Here is a 324-residue protein sequence, read N- to C-terminus: Mating-type protein A-3 (324 aa).

The segment at residues Thr147–Tyr215 is a DNA-binding region (HMG box).

The protein localises to the nucleus. In terms of biological role, required, together with mating-type protein A-2, for efficient ascospore formation. This chain is Mating-type protein A-3 (mtA-3), found in Neurospora crassa (strain ATCC 24698 / 74-OR23-1A / CBS 708.71 / DSM 1257 / FGSC 987).